We begin with the raw amino-acid sequence, 137 residues long: Basic phospholipase A2 2 (137 aa).

An N-terminal signal peptide occupies residues 1–11 (LVAVCVSLLGA). Positions 12–19 (ANIPPQPL) are excised as a propeptide. 7 disulfide bridges follow: Cys30–Cys89, Cys44–Cys136, Cys46–Cys62, Cys61–Cys117, Cys68–Cys110, Cys78–Cys103, and Cys96–Cys108. The Ca(2+) site is built by Tyr45 and Gly47. Tyr48 lines the alpha-D-mannopyranose pocket. Position 49 (Gly49) interacts with Ca(2+). His65 is a catalytic residue. Residue Asp66 participates in Ca(2+) binding. Asp66 contacts alpha-D-mannopyranose. Asp111 is an active-site residue.

This sequence belongs to the phospholipase A2 family. Group I subfamily. D49 sub-subfamily. In terms of assembly, homodimer; non-covalently linked. It depends on Ca(2+) as a cofactor. Homodimerization and interaction of the catalytically important Asp-49 (here Asp-111) with mannose molecules may render this protein inactive. As to expression, expressed by the venom gland.

It is found in the secreted. The enzyme catalyses a 1,2-diacyl-sn-glycero-3-phosphocholine + H2O = a 1-acyl-sn-glycero-3-phosphocholine + a fatty acid + H(+). In terms of biological role, snake venom phospholipase A2 (PLA2) that shows anticoagulant and neurotoxic activities. Its function is as follows. PLA2 catalyzes the calcium-dependent hydrolysis of the 2-acyl groups in 3-sn-phosphoglycerides. This is Basic phospholipase A2 2 from Bungarus caeruleus (Indian krait).